Here is a 201-residue protein sequence, read N- to C-terminus: MEQLTARQTEVLQIITRHLETCGYPPTLREIAAQLGISGTLGVMKHLEALEKKGYLRRQEGSTRGITLCNQSQAASLPIVGVVRAGLLHPAIQDIEGHFAIDRSQLASGGAFFLRVKGDSMVHAHIVEGDLALVRPQPHASNRDIVVAMVDGEATLKRFYREADRIRLQPENPNYEPIIIEKGEQEVSIVGKVVGIYRQME.

The H-T-H motif DNA-binding region spans Leu-28 to Glu-48. Residues Ser-120 and Lys-157 each act as for autocatalytic cleavage activity in the active site.

Belongs to the peptidase S24 family. As to quaternary structure, homodimer.

The enzyme catalyses Hydrolysis of Ala-|-Gly bond in repressor LexA.. In terms of biological role, represses a number of genes involved in the response to DNA damage (SOS response), including recA and lexA. In the presence of single-stranded DNA, RecA interacts with LexA causing an autocatalytic cleavage which disrupts the DNA-binding part of LexA, leading to derepression of the SOS regulon and eventually DNA repair. This chain is LexA repressor, found in Citrifermentans bemidjiense (strain ATCC BAA-1014 / DSM 16622 / JCM 12645 / Bem) (Geobacter bemidjiensis).